The primary structure comprises 258 residues: Imidazole glycerol phosphate synthase subunit HisF (258 aa).

Catalysis depends on residues aspartate 11 and aspartate 130.

The protein belongs to the HisA/HisF family. Heterodimer of HisH and HisF.

The protein resides in the cytoplasm. It catalyses the reaction 5-[(5-phospho-1-deoxy-D-ribulos-1-ylimino)methylamino]-1-(5-phospho-beta-D-ribosyl)imidazole-4-carboxamide + L-glutamine = D-erythro-1-(imidazol-4-yl)glycerol 3-phosphate + 5-amino-1-(5-phospho-beta-D-ribosyl)imidazole-4-carboxamide + L-glutamate + H(+). It participates in amino-acid biosynthesis; L-histidine biosynthesis; L-histidine from 5-phospho-alpha-D-ribose 1-diphosphate: step 5/9. In terms of biological role, IGPS catalyzes the conversion of PRFAR and glutamine to IGP, AICAR and glutamate. The HisF subunit catalyzes the cyclization activity that produces IGP and AICAR from PRFAR using the ammonia provided by the HisH subunit. The chain is Imidazole glycerol phosphate synthase subunit HisF from Yersinia enterocolitica serotype O:8 / biotype 1B (strain NCTC 13174 / 8081).